A 92-amino-acid polypeptide reads, in one-letter code: Plasmid copy control protein CopR (92 aa).

Basic and acidic residues predominate over residues 1–27; that stretch reads MELAFRESLKKMRGTKSKEKFSQELEM. 2 disordered regions span residues 1–40 and 63–92; these read MELA…SGKS and IPNE…NDFV. Residues 9–62 form the HTH cro/C1-type domain; sequence LKKMRGTKSKEKFSQELEMSRSNYSRIESGKSDPTIKTLEQIVKLTNSTLVVDL. Residues 20–39 constitute a DNA-binding region (H-T-H motif); it reads KFSQELEMSRSNYSRIESGK.

Involved in copy control of plasmid pIP501. The sequence is that of Plasmid copy control protein CopR (copR) from Streptococcus agalactiae.